The following is a 329-amino-acid chain: MLPIPEELTTLISDLELYLADGLKGENLSKKAKEKREAFIKRIKEVKLSFPQDFKDKYAEDSEEEEDWDSNEGGSLQSERTDKDEEACEGAQQAPAVAAQDLTSVFKAGYLEKRRKDHSFFGTEWQKRWCALSGQTFYYYGSEKDKQQKGEFNIEGYRVKMNSSLRKDSKKDFCFEISATDKRSYMFCASSVKEAEEWVKQIDFVLKDMTGIIPEEEEEGQELYDDVGQMDEIYEVLPEEDMPSPPPKVEPVSKHPPPTPAVDKSTDYANYYQGLWDCMGDLPDELSFKRGDAIYILSREYQTFGWWVGEKNGQIGIVPKDYLMELYAL.

A disordered region spans residues 58–95 (YAEDSEEEEDWDSNEGGSLQSERTDKDEEACEGAQQAP). Residues 61–70 (DSEEEEDWDS) show a composition bias toward acidic residues. Positions 104 to 207 (SVFKAGYLEK…WVKQIDFVLK (104 aa)) constitute a PH domain. The segment at 240-263 (EDMPSPPPKVEPVSKHPPPTPAVD) is disordered. The segment covering 243 to 260 (PSPPPKVEPVSKHPPPTP) has biased composition (pro residues). An SH3 domain is found at 267 to 328 (DYANYYQGLW…PKDYLMELYA (62 aa)).

Belongs to the SKAP family. Post-translationally, phosphorylated on tyrosines.

Its subcellular location is the cytoplasm. May be involved in B-cell and macrophage adhesion processes. May play a role in src signaling pathway. The chain is Src kinase-associated phosphoprotein 2 (skap2) from Takifugu rubripes (Japanese pufferfish).